Here is a 1432-residue protein sequence, read N- to C-terminus: Probable ATP-dependent RNA helicase spindle-E (1432 aa).

Positions 124–291 constitute a Helicase ATP-binding domain; sequence LAAINAHPVV…FTTTNSVPPV (168 aa). Residue 137-144 participates in ATP binding; the sequence is GQTGCGKT. Positions 237-240 match the DEAH box motif; it reads DEVH. Residues 337 to 524 form the Helicase C-terminal domain; sequence KIIMVIDNME…NSVLRAKELE (188 aa). The 64-residue stretch at 936-999 folds into the Tudor domain; that stretch reads AGAITKGMMV…RLMPKELIQQ (64 aa).

This sequence belongs to the DEAD box helicase family. DEAH subfamily.

The protein localises to the cytoplasm. It carries out the reaction ATP + H2O = ADP + phosphate + H(+). Probable ATP-binding RNA helicase which plays a central role during spermatogenesis and oogenesis by repressing transposable elements and preventing their mobilization, which is essential for the germline integrity. Acts via the piRNA metabolic process, which mediates the repression of transposable elements during meiosis by forming complexes composed of piRNAs and Piwi and govern the methylation and subsequent repression of transposons. Involved in the repression of LTR retrotransposon copia. Also involved in telomere regulation by repressing specialized telomeric retroelements HeT-A, TAHRE, and TART; Drosophila telomeres being maintained by transposition of specialized telomeric retroelements. Involved in telomeric trans-silencing, a repression mechanism by which a transposon or a transgene inserted in subtelomeric heterochromatin has the capacity to repress in trans in the female germline, a homologous transposon, or transgene located in euchromatin. Involved in the repression of testis-expressed Stellate genes by the homologous Su(Ste) repeats. Required for anteroposterior and dorsoventral axis formation during oogenesis. This Drosophila erecta (Fruit fly) protein is Probable ATP-dependent RNA helicase spindle-E (spn-E).